Consider the following 151-residue polypeptide: Secreted RxLR effector protein 30 (151 aa).

The first 19 residues, 1–19 (MRSSTILIVLGIAILAVNG), serve as a signal peptide directing secretion. The RxLR-dEER motif lies at 38 to 53 (RLLRSTSTEHETDEER).

Belongs to the RxLR effector family.

Its subcellular location is the secreted. The protein localises to the host nucleus. Functionally, effector that acts as a broad suppressor of cell death to interrupt plant immunity. Inhibits cell death induced by cell death-inducing proteins, including the PAMP elicitor INF1 from P.infestans. The sequence is that of Secreted RxLR effector protein 30 from Plasmopara viticola (Downy mildew of grapevine).